The following is a 119-amino-acid chain: Large ribosomal subunit protein uL14 (119 aa).

The protein belongs to the universal ribosomal protein uL14 family. Part of the 50S ribosomal subunit. Forms a cluster with proteins L3 and L19. In the 70S ribosome, L14 and L19 interact and together make contacts with the 16S rRNA in bridges B5 and B8.

Its function is as follows. Binds to 23S rRNA. Forms part of two intersubunit bridges in the 70S ribosome. The sequence is that of Large ribosomal subunit protein uL14 from Neorickettsia sennetsu (strain ATCC VR-367 / Miyayama) (Ehrlichia sennetsu).